We begin with the raw amino-acid sequence, 158 residues long: Major latex protein 22 (158 aa).

It belongs to the MLP family. Laticifer.

It localises to the vacuole. It is found in the cytoplasmic vesicle. In terms of biological role, not known; MLPs constitute up to 50% of the soluble latex protein. The protein is Major latex protein 22 (MLP22) of Papaver somniferum (Opium poppy).